Reading from the N-terminus, the 361-residue chain is Probable mannitol dehydrogenase (361 aa).

Positions 51, 73, 104, 107, 110, 118, and 167 each coordinate Zn(2+).

Belongs to the zinc-containing alcohol dehydrogenase family. Zn(2+) serves as cofactor.

It catalyses the reaction D-mannitol + NAD(+) = D-mannose + NADH + H(+). Oxidizes mannitol to mannose. Provides the initial step by which translocated mannitol is committed to central metabolism and, by regulating mannitol pool size, is important in regulating salt tolerance at the cellular level. In Mesembryanthemum crystallinum (Common ice plant), this protein is Probable mannitol dehydrogenase (ELI3).